Consider the following 156-residue polypeptide: Small ribosomal subunit protein uS7c (156 aa).

The protein belongs to the universal ribosomal protein uS7 family. In terms of assembly, part of the 30S ribosomal subunit.

It localises to the plastid. It is found in the cyanelle. In terms of biological role, one of the primary rRNA binding proteins, it binds directly to 16S rRNA where it nucleates assembly of the head domain of the 30S subunit. The sequence is that of Small ribosomal subunit protein uS7c (rps7) from Cyanophora paradoxa.